We begin with the raw amino-acid sequence, 394 residues long: UPF0229 protein RBAM_009260 (394 aa).

This sequence belongs to the UPF0229 family.

This Bacillus velezensis (strain DSM 23117 / BGSC 10A6 / LMG 26770 / FZB42) (Bacillus amyloliquefaciens subsp. plantarum) protein is UPF0229 protein RBAM_009260.